Consider the following 135-residue polypeptide: FK506-binding protein 2 (135 aa).

Residues 1–20 (MRVPIITTLLTLALTGLSQA) form the signal peptide. In terms of domain architecture, PPIase FKBP-type spans 40–128 (GDTVKMHYRG…IFQTELLEIE (89 aa)). The short motif at 132–135 (KDEL) is the Prevents secretion from ER element.

The protein belongs to the FKBP-type PPIase family. FKBP2 subfamily.

It is found in the endoplasmic reticulum. The catalysed reaction is [protein]-peptidylproline (omega=180) = [protein]-peptidylproline (omega=0). With respect to regulation, inhibited by both FK506 and rapamycin. Functionally, PPIases accelerate the folding of proteins. It catalyzes the cis-trans isomerization of proline imidic peptide bonds in oligopeptides. This chain is FK506-binding protein 2 (fkbB), found in Emericella nidulans (strain FGSC A4 / ATCC 38163 / CBS 112.46 / NRRL 194 / M139) (Aspergillus nidulans).